We begin with the raw amino-acid sequence, 516 residues long: Cytochrome P450 monooxygenase asR2 (516 aa).

A helical membrane pass occupies residues 9-29 (LNSITFSLLVFLGFVGVSQLI). N-linked (GlcNAc...) asparagine glycosylation is found at N248 and N273. C461 is a binding site for heme.

The protein belongs to the cytochrome P450 family. Heme is required as a cofactor.

It localises to the membrane. The protein operates within secondary metabolite biosynthesis; terpenoid biosynthesis. Its function is as follows. Cytochrome P450 monooxygenase; part of the gene cluster that mediates the biosynthesis of xenovulene A, an unusual meroterpenoid that has potent inhibitory effects on the human gamma-aminobutyrate A (GABAA) benzodiazepine receptor. The first step of xenovulene A biosynthesis is the biosynthesis of 3-methylorcinaldehyde performed by the non-reducing polyketide synthase aspks1. The salicylate hydroxylase asL1 then catalyzes the oxidative dearomatization of 3-methylorcinaldehyde to yield a dearomatized hydroxycyclohexadione. The 2-oxoglutarate-dependent dioxygenase asL3 further catalyzes the oxidative ring expansion to provide the first tropolone metabolite. The cytochrome P450 monooxygenase asR2 allows the synthesis of tropolone hemiacetal. In parallel, a previously unrecognised class of terpene cyclase, asR6, produces alpha-humulene from farnesylpyrophosphate (FPP). The putative Diels-Alderase asR5 probably catalyzes the formation of the tropolone-humulene skeleton by linking humulene and the polyketide moiety. Oxidative-ring contractions catalyzed by asL4 and asL6 then processively remove carbon atoms from the polyketide to yield xenovulene A. In Sarocladium schorii (Acremonium strictum (strain IMI 501407)), this protein is Cytochrome P450 monooxygenase asR2.